Consider the following 1641-residue polypeptide: Alpha-2-macroglobulin (1641 aa).

Residues 1–31 (MRDRVAMMLRPLVRGWIPRAVLLLTVAFSFG) form the signal peptide. Residue C32 is the site of N-palmitoyl cysteine attachment. A lipid anchor (S-diacylglycerol cysteine) is attached at C32. Residues 1166–1169 (CAEQ) constitute a cross-link (isoglutamyl cysteine thioester (Cys-Gln)).

It belongs to the protease inhibitor I39 (alpha-2-macroglobulin) family. Bacterial alpha-2-macroglobulin subfamily.

Its subcellular location is the cell membrane. Functionally, protects the bacterial cell from host peptidases. The chain is Alpha-2-macroglobulin from Xylella fastidiosa (strain 9a5c).